We begin with the raw amino-acid sequence, 285 residues long: MTAEHPARLPQAFMTPGSSSFVDFLAAHDPSLLPSSRALPAGSAPPAPHGTTIVAATFDGGVVVAGDRRATSGSMIAHREIEKVFAADEFSAVGIAGTAGLALELVRLFQLELEHYEKIEGTLLSLDGKANRLSTMIRGNLGLAMQGLAVVPLFAGFDLVERRGRIFSYDVTGGRYEELDHHSVGSGSVFARGALKKLWRPGLDAEAAVRVVVEALFDAADDDSATGGPDAVRQIWPVVATVSEAGYLRQGDDALESVVEDISLERTRQARSSRSRHGSLGGDLR.

Residues 1–50 constitute a propeptide, removed in mature form; by autocatalysis; sequence MTAEHPARLPQAFMTPGSSSFVDFLAAHDPSLLPSSRALPAGSAPPAPHG. Catalysis depends on threonine 51, which acts as the Nucleophile. The interval 266–285 is disordered; it reads RTRQARSSRSRHGSLGGDLR.

The protein belongs to the peptidase T1B family. The 20S proteasome core is composed of 14 alpha and 14 beta subunits that assemble into four stacked heptameric rings, resulting in a barrel-shaped structure. The two inner rings, each composed of seven catalytic beta subunits, are sandwiched by two outer rings, each composed of seven alpha subunits. The catalytic chamber with the active sites is on the inside of the barrel. Has a gated structure, the ends of the cylinder being occluded by the N-termini of the alpha-subunits. Is capped by the proteasome-associated ATPase, ARC.

It is found in the cytoplasm. The enzyme catalyses Cleavage of peptide bonds with very broad specificity.. It participates in protein degradation; proteasomal Pup-dependent pathway. Its activity is regulated as follows. The formation of the proteasomal ATPase ARC-20S proteasome complex, likely via the docking of the C-termini of ARC into the intersubunit pockets in the alpha-rings, may trigger opening of the gate for substrate entry. Interconversion between the open-gate and close-gate conformations leads to a dynamic regulation of the 20S proteasome proteolysis activity. Its function is as follows. Component of the proteasome core, a large protease complex with broad specificity involved in protein degradation. The protein is Proteasome subunit beta of Sanguibacter keddieii (strain ATCC 51767 / DSM 10542 / NCFB 3025 / ST-74).